The chain runs to 601 residues: Elongation factor 4 (601 aa).

The region spanning 5–187 is the tr-type G domain; it reads IRKKNFCIIA…AICKYVPSPK (183 aa). GTP is bound by residues 17–22 and 134–137; these read DHGKST and NKID.

Belongs to the TRAFAC class translation factor GTPase superfamily. Classic translation factor GTPase family. LepA subfamily.

The protein resides in the cell inner membrane. It carries out the reaction GTP + H2O = GDP + phosphate + H(+). Required for accurate and efficient protein synthesis under certain stress conditions. May act as a fidelity factor of the translation reaction, by catalyzing a one-codon backward translocation of tRNAs on improperly translocated ribosomes. Back-translocation proceeds from a post-translocation (POST) complex to a pre-translocation (PRE) complex, thus giving elongation factor G a second chance to translocate the tRNAs correctly. Binds to ribosomes in a GTP-dependent manner. The chain is Elongation factor 4 from Borreliella afzelii (strain PKo) (Borrelia afzelii).